Here is a 96-residue protein sequence, read N- to C-terminus: MLPKATVKRIMKQHTDFNISAEAVDELCNMLEEIIKITTEVAEQNARKEGRKTIKARDIKQCDDERLKRKIMELSERTDKMPILIKEMLNVITSEL.

The interval 52–55 (KTIK) is interaction with DNA.

This sequence belongs to the archaeal histone HMF family. Homodimer. Dimers then assemble into higher oligomers, with the DNA wrapped around the protein core.

The protein localises to the cytoplasm. The protein resides in the chromosome. Its function is as follows. Binds and compact DNA (95 to 150 base pairs) to form nucleosome-like structures that contain positive DNA supercoils. Increases the resistance of DNA to thermal denaturation (in vitro). The sequence is that of DNA-binding protein HmvA (hmvA) from Methanocaldococcus jannaschii (strain ATCC 43067 / DSM 2661 / JAL-1 / JCM 10045 / NBRC 100440) (Methanococcus jannaschii).